Reading from the N-terminus, the 268-residue chain is MSDAIRAVILGIIEGVTEFLPVSSTGHLLLAERFFHLGEGAFWDSFTVLIQLGAILAIVGLYFKKLWDVVIGFFTGDTYSRRFVIGVLVAFLPAVVVGLVAGKYIKSVLFNPWVVCFTLIVGGAILLWVDKLDLKPREHDATRFPLLMYLYIGIAQCVAMIPGVSRSGASIVAAMLLGADKRAAAEFSFFLAIPTMIGAFAYDFYKNRSEMTMDHMGIVAIGFVVSFITAVIVVKTFLTYVTRHGFVVFAWWRVIVGTLGLIALALGR.

Helical transmembrane passes span 8–28 (VILG…TGHL), 41–61 (AFWD…IVGL), 83–103 (FVIG…VAGK), 108–128 (VLFN…ILLW), 144–164 (FPLL…IPGV), 184–204 (AAEF…AYDF), 218–238 (IVAI…KTFL), and 246–266 (FVVF…ALAL).

It belongs to the UppP family.

Its subcellular location is the cell inner membrane. The enzyme catalyses di-trans,octa-cis-undecaprenyl diphosphate + H2O = di-trans,octa-cis-undecaprenyl phosphate + phosphate + H(+). Catalyzes the dephosphorylation of undecaprenyl diphosphate (UPP). Confers resistance to bacitracin. This chain is Undecaprenyl-diphosphatase, found in Bradyrhizobium diazoefficiens (strain JCM 10833 / BCRC 13528 / IAM 13628 / NBRC 14792 / USDA 110).